A 167-amino-acid polypeptide reads, in one-letter code: Novel acetylcholine receptor chaperone (167 aa).

At 1-5 the chain is on the cytoplasmic side; it reads MASPR. The helical transmembrane segment at 6-26 threads the bilayer; the sequence is TITIMALSVALGLFFVFMGTI. Residues 27–61 are Lumenal-facing; that stretch reads KLTPRLSKDAYSEMKRAYKSYVRALPLLKKMGINS. Residues 43–54 are interaction with NGFR; it reads AYKSYVRALPLL. The helical transmembrane segment at 62 to 82 threads the bilayer; it reads ILLRKSIGALEVACGIVMTLV. Over 83–88 the chain is Cytoplasmic; it reads PGRPKD. The helical transmembrane segment at 89-109 threads the bilayer; the sequence is VANFFLLLLVLAVLFFHQLVG. At 110–114 the chain is on the lumenal side; the sequence is DPLKR. Residues 115-132 traverse the membrane as a helical segment; that stretch reads YAHALVFGILLTCRLLIA. Residues 133–167 are Cytoplasmic-facing; the sequence is RKPEDRSSEKKALPESAEEQPSLYEKAPQGKVKVS. Residues 135–145 show a composition bias toward basic and acidic residues; sequence PEDRSSEKKAL. The interval 135-167 is disordered; it reads PEDRSSEKKALPESAEEQPSLYEKAPQGKVKVS.

Belongs to the DoxX family. May interact with NGFR. Interacts with RPN1, RPN2 and CANX. Brain (at protein level). Expressed in the spinal cord dorsal horn (at protein level).

It is found in the peroxisome membrane. The protein localises to the cytoplasmic vesicle. It localises to the endoplasmic reticulum membrane. Its function is as follows. Molecular chaperone which mediates the proper assembly and functional expression of the nicotinic acetylcholine receptors (nAChRs) throughout the brain. Essential for the proper folding, assembly, function and surface trafficking of alpha-7 (CHRNA7), alpha-4-beta-2, alpha-3-beta-2 and alpha-3-beta-4 receptors. Stably associates with ribophorin-1 (RPN1) and ribophorin-2 (RPN2) (components of the oligosaccharyl transferase (OST) complex) and with calnexin (CANX), both of which are critical for NACHO-mediated effects on CHRNA7 assembly and function. Facilitates the proper folding and assembly of alpha-6-beta-2 and alpha-6-beta-2-beta-3 receptors and acts at early stages of the nAChRs subunit assembly. Promotes the expression of the alpha-4(2):beta-2(3) stoichiometric form over the alpha-4(3):beta-2(2) form. This Mus musculus (Mouse) protein is Novel acetylcholine receptor chaperone.